We begin with the raw amino-acid sequence, 330 residues long: Formylaminopyrimidine-binding protein (330 aa).

The N-terminal stretch at 1-18 is a signal peptide; sequence MKSFKIISLLLAILFLAS. Cysteine 19 carries N-palmitoyl cysteine lipidation. The S-diacylglycerol cysteine moiety is linked to residue cysteine 19. Substrate-binding positions include 38–39, tyrosine 90, asparagine 145, tyrosine 188, and glutamate 192; that span reads DW.

This sequence belongs to the NMT1 family. In terms of assembly, the complex is likely composed of an ATP-binding protein (ThiZ), a transmembrane protein (ThiX) and a solute-binding protein (ThiY).

It is found in the cell membrane. Its pathway is cofactor biosynthesis; thiamine diphosphate biosynthesis. Participates in a thiamine pyrimidine salvage pathway as part of the ABC transporter complex ThiXYZ involved in the import of thiamine degradation products. Binds the formylaminopyrimidine N-formyl-4-amino-5-aminomethyl-2-methylpyrimidine (FAMP). Does not bind thiamine. In Halalkalibacterium halodurans (strain ATCC BAA-125 / DSM 18197 / FERM 7344 / JCM 9153 / C-125) (Bacillus halodurans), this protein is Formylaminopyrimidine-binding protein.